Reading from the N-terminus, the 766-residue chain is U3 small nucleolar RNA-associated protein 14 homolog C (766 aa).

The disordered stretch occupies residues 14-42 (HQEELVDLPKNYPLSENEDEGDSDGERKH). Phosphoserine is present on residues serine 28, serine 51, serine 76, and serine 80. Residue lysine 121 forms a Glycyl lysine isopeptide (Lys-Gly) (interchain with G-Cter in SUMO2) linkage. Threonine 204 bears the Phosphothreonine mark. Coiled coils occupy residues 216 to 245 (LEEA…KEKK) and 316 to 346 (LEAR…EEEE). The disordered stretch occupies residues 365–563 (MNVDGPNPWM…EQLINLQNFL (199 aa)). Over residues 396–405 (ELAAHEVSAS) the composition is skewed to low complexity. Serine 403 and serine 405 each carry phosphoserine. The segment covering 407–434 (AEERPVAEEEILLREFEERQSLRKRSEL) has biased composition (basic and acidic residues). Serine 443 is modified (phosphoserine). Residue lysine 447 forms a Glycyl lysine isopeptide (Lys-Gly) (interchain with G-Cter in SUMO2) linkage. Serine 451 is modified (phosphoserine). The stretch at 452 to 470 (QEVLSELRALSQKLKEKHQ) forms a coiled coil. Over residues 466–475 (KEKHQSRKQK) the composition is skewed to basic residues. Basic and acidic residues predominate over residues 502–527 (RSERVQTLEELEELGKEDCFQNKELP). Lysine 517 participates in a covalent cross-link: Glycyl lysine isopeptide (Lys-Gly) (interchain with G-Cter in SUMO2). Polar residues predominate over residues 533 to 542 (GQQSERTPNN). The segment covering 545 to 555 (DAPKEKKEKEQ) has biased composition (basic and acidic residues). Serine 567 bears the Phosphoserine mark. Lysine 732 participates in a covalent cross-link: Glycyl lysine isopeptide (Lys-Gly) (interchain with G-Cter in SUMO2). The interval 734–766 (EDVGYQSSSRSDLPVIQRNPKRITTRHNKEEKL) is disordered.

It belongs to the UTP14 family. As to expression, expressed in testis.

The protein localises to the nucleus. The protein resides in the nucleolus. In terms of biological role, essential for spermatogenesis. May be required specifically for ribosome biogenesis and hence protein synthesis during male meiosis. This is U3 small nucleolar RNA-associated protein 14 homolog C (UTP14C) from Homo sapiens (Human).